Here is a 347-residue protein sequence, read N- to C-terminus: Phosphate acyltransferase (347 aa).

The protein belongs to the PlsX family. In terms of assembly, homodimer. Probably interacts with PlsY.

It is found in the cytoplasm. It carries out the reaction a fatty acyl-[ACP] + phosphate = an acyl phosphate + holo-[ACP]. Its pathway is lipid metabolism; phospholipid metabolism. Catalyzes the reversible formation of acyl-phosphate (acyl-PO(4)) from acyl-[acyl-carrier-protein] (acyl-ACP). This enzyme utilizes acyl-ACP as fatty acyl donor, but not acyl-CoA. The protein is Phosphate acyltransferase of Pediococcus pentosaceus (strain ATCC 25745 / CCUG 21536 / LMG 10740 / 183-1w).